The following is a 2073-amino-acid chain: Putative mediator of RNA polymerase II transcription subunit 26 (2073 aa).

Disordered regions lie at residues 22–94, 115–146, 241–260, and 287–334; these read IERM…QSFQ, PQLQQQQQQQQQQQPSFNSNNNNNNNTNTYNF, QMQQQQIPHHQQNQQLQQQQ, and QQHQ…QNQQ. Positions 31–41 are enriched in polar residues; sequence NQSVEMDSHTF. The segment covering 42 to 78 has biased composition (low complexity); sequence NNNNNNNNNNNINNNNNINNNNNNNNNNNNNNNSINN. Coiled coils occupy residues 166–453 and 674–710; these read IQQQ…QQQQ and LRQQQQQQQQQQQQQQQQQQQQQQQQQQQIQIQNQTI. Composition is skewed to low complexity over residues 287-314 and 322-334; these read QQHQQHQQHQQHQQQHQQHQQQHQQHQQ and QQHQQQQQPQNQQ. Disordered stretches follow at residues 796-879, 908-1175, 1215-1260, 1403-1475, 1489-1539, 1551-1571, 1587-1645, 1804-1836, 1868-1935, and 2019-2073; these read KGNN…NNDI, INNN…NNNI, NTTS…TVIN, NTSS…LPPK, KLST…SLSP, AAAAKKQQTQELSDSTAKSLS, KSQT…SKGK, INNNNNTHSNSPDENNTKMINDENNDPNNTGSS, NNNN…GYNN, and FNNN…QSYS. Composition is skewed to low complexity over residues 798-870 and 923-937; these read NNNN…NTNN and SSSSNSNSSSPNIPN. Residues 938-947 show a composition bias toward basic residues; it reads KPKKPVKSNS. Residues 953–963 are compositionally biased toward acidic residues; sequence LLEDNDSDSSD. 5 stretches are compositionally biased toward low complexity: residues 964–977, 1027–1038, 1047–1065, 1073–1115, and 1127–1156; these read SSDSSDSSDSSDSS, ASTATSTTTTTT, PTSKIKPSSTIPSQPTSIT, STTS…SSSS, and KKPISTINNNTLNNNTNSSINKIASNSTST. The segment covering 1157–1166 has biased composition (polar residues); that stretch reads LGNKNLGTPS. Composition is skewed to low complexity over residues 1215 to 1258 and 1403 to 1424; these read NTTS…TTTV and NTSSTTSSASSSSSSSISNGNN. Over residues 1425–1440 the composition is skewed to basic and acidic residues; that stretch reads SDKKRNRDQPITDTSK. Low complexity-rich tracts occupy residues 1444–1465, 1490–1520, 1527–1539, and 1551–1560; these read SSSSSSSSSSSSSSSTNARSSS, LSTPSSSSSSSSSSSSSSTTTTTTSTGSTIP, SSSSSNNNNSLSP, and AAAAKKQQTQ. Positions 1561–1571 are enriched in polar residues; it reads ELSDSTAKSLS. 2 stretches are compositionally biased toward low complexity: residues 1599–1609 and 1804–1817; these read SSNVSGKSDSS and INNNNNTHSNSPDE. The stretch at 1884–1930 forms a coiled coil; sequence NNMGNMNNQFNNMNNNNNNNQFNNGYNNNNNNNNNNNNNNNNNNNNM.

It belongs to the Mediator complex subunit 26 family. In terms of assembly, component of the Mediator complex.

The protein resides in the nucleus. Component of the Mediator complex, a coactivator involved in the regulated transcription of nearly all RNA polymerase II-dependent genes. Mediator functions as a bridge to convey information from gene-specific regulatory proteins to the basal RNA polymerase II transcription machinery. Mediator is recruited to promoters by direct interactions with regulatory proteins and serves as a scaffold for the assembly of a functional preinitiation complex with RNA polymerase II and the general transcription factors. The polypeptide is Putative mediator of RNA polymerase II transcription subunit 26 (med26) (Dictyostelium discoideum (Social amoeba)).